Reading from the N-terminus, the 139-residue chain is Peptide methionine sulfoxide reductase B4 (139 aa).

An N-acetylalanine modification is found at Ala-2. The MsrB domain maps to 12–133; that stretch reads EEEWRAVLSP…NSVSINFNPA (122 aa). Zn(2+) is bound by residues Cys-51, Cys-54, Cys-97, and Cys-100. Cys-69 and Cys-122 are oxidised to a cystine. Cys-122 serves as the catalytic Nucleophile.

Belongs to the MsrB Met sulfoxide reductase family. Zn(2+) serves as cofactor.

Its subcellular location is the cytoplasm. It is found in the cytosol. It catalyses the reaction L-methionyl-[protein] + [thioredoxin]-disulfide + H2O = L-methionyl-(R)-S-oxide-[protein] + [thioredoxin]-dithiol. Functionally, catalyzes the reduction of methionine sulfoxide (MetSO) to methionine in proteins. Plays a protective role against oxidative stress by restoring activity to proteins that have been inactivated by methionine oxidation. MSRB family specifically reduces the MetSO R-enantiomer. This is Peptide methionine sulfoxide reductase B4 (MSRB4) from Arabidopsis thaliana (Mouse-ear cress).